A 345-amino-acid chain; its full sequence is GMP reductase 1 (345 aa).

Residues 26 to 27 (SR), K78, 129 to 131 (DVA), and 180 to 181 (VG) each bind NADP(+). 3 residues coordinate K(+): G181, G183, and C186. Catalysis depends on C186, which acts as the Thioimidate intermediate. The active-site Proton donor/acceptor is the T188. R189 serves as a coordination point for K(+). GMP is bound by residues 219–221 (DGG), 242–243 (GG), 268–270 (GMS), and 286–290 (RASEG). Residues M269, 285-286 (YR), and 314-317 (STCT) each bind NADP(+).

Belongs to the IMPDH/GMPR family. GuaC type 1 subfamily. As to quaternary structure, homotetramer.

The enzyme catalyses IMP + NH4(+) + NADP(+) = GMP + NADPH + 2 H(+). In terms of biological role, catalyzes the irreversible NADPH-dependent deamination of GMP to IMP. It functions in the conversion of nucleobase, nucleoside and nucleotide derivatives of G to A nucleotides, and in maintaining the intracellular balance of A and G nucleotides. The polypeptide is GMP reductase 1 (GMPR) (Homo sapiens (Human)).